The primary structure comprises 205 residues: CD83 antigen (205 aa).

A signal peptide spans 1–19 (MSRGLQLLLLSCAYSLAPA). In terms of domain architecture, Ig-like V-type spans 20–114 (TPEVKVACSE…YRCTLQDPDG (95 aa)). Over 20–144 (TPEVKVACSE…EETFKKYRAE (125 aa)) the chain is Extracellular. Residues Cys35 and Cys107 are joined by a disulfide bond. The segment covering 60-69 (METPQEDHLR) has biased composition (basic and acidic residues). The tract at residues 60-81 (METPQEDHLRGQHYHQKGQNGS) is disordered. 3 N-linked (GlcNAc...) asparagine glycosylation sites follow: Asn79, Asn96, and Asn117. Residues 145–166 (IVLLLALVIFYLTLIIFTCKFA) form a helical membrane-spanning segment. Residues 167–205 (RLQSIFPDFSKAGMERAFLPVTSPNKHLGLVTPHKTELV) lie on the Cytoplasmic side of the membrane.

In terms of assembly, monomer. Homodimer. Homotrimer. Interacts with MARCHF1; this interaction antagonizes MARCHF1-mediated MHC II and CD86 down-regulation. Glycosylated when expressed on activated dendritic cells. As to expression, expressed by activated lymphocytes, Langerhans cells and activatd dendritic cells.

The protein resides in the membrane. In terms of biological role, transmembrane glycoprotein predominantly found on the surface of many immune cells including dendritic cells or lymphocytes that plays various roles in immune response regulation. Plays an essential role in CD4(+) T-selection, differentiation and stability by regulating the activity of the major E3 ubiquitin ligase responsible for controlling MHCII trafficking MARCHF8. Also inhibits MARCHF1 association with MHCII or CD86 to prevent their ubiquitination and subsequent degradation. In addition, acts as an important modulator of protective responses against acute infections. The sequence is that of CD83 antigen (CD83) from Homo sapiens (Human).